The primary structure comprises 812 residues: Probable phosphoketolase (812 aa).

This sequence belongs to the XFP family. It depends on thiamine diphosphate as a cofactor.

This is Probable phosphoketolase from Thermosynechococcus vestitus (strain NIES-2133 / IAM M-273 / BP-1).